A 256-amino-acid polypeptide reads, in one-letter code: uncharacterized protein (256 aa).

The protein to B.subtilis LplA.

This is an uncharacterized protein from Niallia circulans (Bacillus circulans).